A 158-amino-acid chain; its full sequence is COP9 signalosome complex subunit 9 (158 aa).

The PCI domain occupies 5–119 (LLRNLIEDKT…SVARRATVLE (115 aa)).

In terms of assembly, component of a COP9 signalosome-like (CSN) complex.

It is found in the cytoplasm. The protein resides in the nucleus. Its function is as follows. Component of the COP9 signalosome (CSN) complex that acts as a regulator of the ubiquitin (Ubl) conjugation pathway by mediating the deneddylation of the cullin subunit of SCF-type E3 ubiquitin-protein ligase complexes. The complex is involved in the regulation of the mating pheromone response. The chain is COP9 signalosome complex subunit 9 (CSN9) from Kluyveromyces lactis (strain ATCC 8585 / CBS 2359 / DSM 70799 / NBRC 1267 / NRRL Y-1140 / WM37) (Yeast).